The following is a 494-amino-acid chain: Glycosyl hydrolase family 109 protein (494 aa).

A disordered region spans residues 1–32; sequence MNDDARPAPEPQDIPPHSGAADEVNRQDPSRR. A signal peptide (tat-type signal) is located at residues 1-58; it reads MNDDARPAPEPQDIPPHSGAADEVNRQDPSRRSVLWTTAGVAGAGLGLGALGAGTASA. Residues 104 to 105, Asp-126, 175 to 178, 195 to 196, and Asn-224 each bind NAD(+); these read NR, WELH, and EC. Substrate contacts are provided by residues Tyr-253, Arg-272, 284 to 287, and Tyr-366; that span reads YPNH. Tyr-284 contacts NAD(+).

This sequence belongs to the Gfo/Idh/MocA family. Glycosyl hydrolase 109 subfamily. The cofactor is NAD(+). Predicted to be exported by the Tat system. The position of the signal peptide cleavage has not been experimentally proven.

In terms of biological role, glycosidase. The chain is Glycosyl hydrolase family 109 protein from Streptomyces filamentosus (Streptomyces roseosporus).